Consider the following 981-residue polypeptide: Proline-rich transmembrane protein 3 (981 aa).

The N-terminal stretch at Met1 to Gly27 is a signal peptide. The Extracellular segment spans residues Arg28 to His474. 2 disordered regions span residues Pro43–Arg107 and Pro169–Pro457. The segment covering Pro65–Glu85 has biased composition (basic and acidic residues). Residues Ser297–Ser302 form an O-glycosylated at one site region. A glycan (O-linked (GalNAc...) serine) is linked at Ser329. The segment covering Ala331–Arg340 has biased composition (basic and acidic residues). An O-linked (GalNAc...) threonine glycan is attached at Thr363. N-linked (GlcNAc...) asparagine glycosylation occurs at Asn379. The segment covering Ala411–Ala427 has biased composition (polar residues). Residues Thr437–Pro457 show a composition bias toward low complexity. A helical membrane pass occupies residues Val475 to Ala495. The Cytoplasmic segment spans residues Ala496–Arg501. The chain crosses the membrane as a helical span at residues Leu502–Leu522. Over Thr523 to Asn542 the chain is Extracellular. A helical membrane pass occupies residues Leu543–Gly563. The Cytoplasmic portion of the chain corresponds to Leu564–Asn570. Residues Pro571–Leu591 traverse the membrane as a helical segment. The Extracellular portion of the chain corresponds to Ser592 to Asn598. The helical transmembrane segment at Leu599–Leu619 threads the bilayer. Residues Cys620 to Arg638 lie on the Cytoplasmic side of the membrane. A helical transmembrane segment spans residues Leu639–Leu659. The Extracellular segment spans residues Trp660–His679. A helical transmembrane segment spans residues Phe680–Ala700. The Cytoplasmic portion of the chain corresponds to Ala701–Leu981. A disordered region spans residues Ala759 to Pro807. The span at Ala765–Arg780 shows a compositional bias: low complexity. Ser777 is modified (phosphoserine). The residue at position 780 (Arg780) is an Omega-N-methylarginine. Phosphoserine occurs at positions 789, 798, 808, 815, 854, 874, 902, 903, and 911. The segment at Leu836 to Ser865 is disordered. A disordered region spans residues Thr937–Leu981. Over residues Arg972–Leu981 the composition is skewed to polar residues.

Its subcellular location is the membrane. In Homo sapiens (Human), this protein is Proline-rich transmembrane protein 3 (PRRT3).